The sequence spans 493 residues: Ketol-acid reductoisomerase (NADP(+)) (493 aa).

The region spanning 14–208 is the KARI N-terminal Rossmann domain; the sequence is LDQLGRCRFM…GGDRAGVLES (195 aa). NADP(+) contacts are provided by residues 45 to 48, Arg68, Arg76, Ser78, and 108 to 110; these read CGAQ and DKQ. His132 is a catalytic residue. Position 158 (Gly158) interacts with NADP(+). 2 KARI C-terminal knotted domains span residues 209-345 and 346-486; these read SFVA…SPKA and DGIK…MTDM. Mg(2+) is bound by residues Asp217, Glu221, Glu390, and Glu394. A substrate-binding site is contributed by Ser415.

This sequence belongs to the ketol-acid reductoisomerase family. Requires Mg(2+) as cofactor.

The catalysed reaction is (2R)-2,3-dihydroxy-3-methylbutanoate + NADP(+) = (2S)-2-acetolactate + NADPH + H(+). It catalyses the reaction (2R,3R)-2,3-dihydroxy-3-methylpentanoate + NADP(+) = (S)-2-ethyl-2-hydroxy-3-oxobutanoate + NADPH + H(+). Its pathway is amino-acid biosynthesis; L-isoleucine biosynthesis; L-isoleucine from 2-oxobutanoate: step 2/4. It functions in the pathway amino-acid biosynthesis; L-valine biosynthesis; L-valine from pyruvate: step 2/4. Functionally, involved in the biosynthesis of branched-chain amino acids (BCAA). Catalyzes an alkyl-migration followed by a ketol-acid reduction of (S)-2-acetolactate (S2AL) to yield (R)-2,3-dihydroxy-isovalerate. In the isomerase reaction, S2AL is rearranged via a Mg-dependent methyl migration to produce 3-hydroxy-3-methyl-2-ketobutyrate (HMKB). In the reductase reaction, this 2-ketoacid undergoes a metal-dependent reduction by NADPH to yield (R)-2,3-dihydroxy-isovalerate. The sequence is that of Ketol-acid reductoisomerase (NADP(+)) from Actinobacillus pleuropneumoniae serotype 3 (strain JL03).